The chain runs to 1254 residues: DNA-directed RNA polymerase subunit beta' (1254 aa).

4 residues coordinate Zn(2+): Cys59, Cys61, Cys76, and Cys79. Asp501, Asp503, and Asp505 together coordinate Mg(2+). Positions 871, 946, 953, and 956 each coordinate Zn(2+).

The protein belongs to the RNA polymerase beta' chain family. The RNAP catalytic core consists of 2 alpha, 1 beta, 1 beta' and 1 omega subunit. When a sigma factor is associated with the core the holoenzyme is formed, which can initiate transcription. Requires Mg(2+) as cofactor. Zn(2+) serves as cofactor.

The catalysed reaction is RNA(n) + a ribonucleoside 5'-triphosphate = RNA(n+1) + diphosphate. Functionally, DNA-dependent RNA polymerase catalyzes the transcription of DNA into RNA using the four ribonucleoside triphosphates as substrates. The chain is DNA-directed RNA polymerase subunit beta' from Mesoplasma florum (strain ATCC 33453 / NBRC 100688 / NCTC 11704 / L1) (Acholeplasma florum).